Consider the following 140-residue polypeptide: Pro-variola growth factor (140 aa).

The N-terminal stretch at 1–18 (MSMKYLMLLFAAMIIRSF) is a signal peptide. Topologically, residues 19 to 100 (ANSGNAIETT…SEKPNTTTSY (82 aa)) are extracellular. Asn34 carries an N-linked (GlcNAc...) asparagine; by host glycan. In terms of domain architecture, EGF-like spans 41–81 (AIRLCGPEGDRYCFHGICIHARDIDGMYCRCSHGYTGIRCQ). 3 disulfide bridges follow: Cys45/Cys58, Cys53/Cys69, and Cys71/Cys80. Asn95 is a glycosylation site (N-linked (GlcNAc...) asparagine; by host). Residues 101–121 (IPSPGIVLVLLVSIIVCCLLF) traverse the membrane as a helical segment. Residues 122-140 (VYRFTRRTNKLPLQDMVVP) are Cytoplasmic-facing.

Belongs to the orthopoxvirus OPG019 family. As to quaternary structure, variola growth factor interacts with host EGFR and promotes EGFR dimerization.

Its subcellular location is the host membrane. The protein localises to the secreted. Its function is as follows. Stimulates cellular proliferation (hyperplasia)and mobility around infected cells to promote rapid and efficient spread of infection. This effect is beneficial for virus replication in vivo, because poxviruses replicate possibly better in proliferating cells than in quiescent cells. Acts by binding host EGFR, inducing its dimerization, autophosphorylation and leading to activation of several cellular pathways regulating cell proliferation or cell survival. The activation by host EGFR of mitogen activated protein kinases (MAPK) and extracellular-signal regulated kinases (ERK) are essential for the positive effect of vaccinia growth factor on poxvirus virulence in vivo. The chain is Pro-variola growth factor (OPG019) from Variola virus (isolate Human/India/Ind3/1967) (VARV).